The sequence spans 446 residues: Exopolygalacturonase (446 aa).

A signal peptide spans 1 to 17 (MRVTDIISCALLQASIA). Residues N53, N118, N134, and N204 are each glycosylated (N-linked (GlcNAc...) asparagine). A PbH1 1 repeat occupies 236 to 257 (SDNIIIQNSNINNGDDCVSFKP). D250 serves as the catalytic Proton donor. C252 and C269 are oxidised to a cystine. N-linked (GlcNAc...) asparagine glycosylation is found at N258 and N270. 3 PbH1 repeats span residues 259 to 279 (STNI…SVGS), 290 to 311 (VENI…RIKV), and 332 to 353 (VRNV…EITQ). H273 is a catalytic residue. N-linked (GlcNAc...) asparagine glycosylation is found at N297, N302, N334, N359, and N369. 2 PbH1 repeats span residues 367-398 (PSNL…VVCS) and 403-434 (CSDI…QSQV). Intrachain disulfides connect C397/C403 and C424/C436. N-linked (GlcNAc...) asparagine glycosylation is present at N435.

The protein belongs to the glycosyl hydrolase 28 family.

Its subcellular location is the secreted. The catalysed reaction is [(1-&gt;4)-alpha-D-galacturonosyl](n) + H2O = alpha-D-galacturonate + [(1-&gt;4)-alpha-D-galacturonosyl](n-1). Its function is as follows. Hydrolysis of 1,4-alpha-D-galactosiduronic linkages in pectate and other galacturonans. The chain is Exopolygalacturonase (PGX1) from Cochliobolus carbonum (Maize leaf spot fungus).